The primary structure comprises 262 residues: Octanoyltransferase (262 aa).

Residues 41 to 232 form the BPL/LPL catalytic domain; it reads PQLPDGLLLL…SFCQVFGLQA (192 aa). Substrate is bound by residues 96–103, 163–165, and 176–178; these read RGGEVTYH, AIG, and GFA. The Acyl-thioester intermediate role is filled by C194.

Belongs to the LipB family.

The protein localises to the cytoplasm. It catalyses the reaction octanoyl-[ACP] + L-lysyl-[protein] = N(6)-octanoyl-L-lysyl-[protein] + holo-[ACP] + H(+). Its pathway is protein modification; protein lipoylation via endogenous pathway; protein N(6)-(lipoyl)lysine from octanoyl-[acyl-carrier-protein]: step 1/2. Functionally, catalyzes the transfer of endogenously produced octanoic acid from octanoyl-acyl-carrier-protein onto the lipoyl domains of lipoate-dependent enzymes. Lipoyl-ACP can also act as a substrate although octanoyl-ACP is likely to be the physiological substrate. The sequence is that of Octanoyltransferase from Synechococcus sp. (strain JA-2-3B'a(2-13)) (Cyanobacteria bacterium Yellowstone B-Prime).